A 223-amino-acid chain; its full sequence is UPF0173 metal-dependent hydrolase TV0864 (223 aa).

It belongs to the UPF0173 family.

This chain is UPF0173 metal-dependent hydrolase TV0864, found in Thermoplasma volcanium (strain ATCC 51530 / DSM 4299 / JCM 9571 / NBRC 15438 / GSS1).